The sequence spans 360 residues: Protein phosphatase methylesterase 1 (360 aa).

The disordered stretch occupies residues 26-50 (DEDDIPEPAVMPPTGNSSSTANTED). Catalysis depends on residues Ser-167, Asp-192, and His-316.

This sequence belongs to the AB hydrolase superfamily.

It carries out the reaction [phosphatase 2A protein]-C-terminal L-leucine methyl ester + H2O = [phosphatase 2A protein]-C-terminal L-leucine + methanol + H(+). In terms of biological role, demethylates proteins that have been reversibly carboxymethylated. Demethylates the phosphatase PP2A catalytic subunit. Involved in the regulation of filamentous growth. This is Protein phosphatase methylesterase 1 (PPE1) from Candida albicans (strain SC5314 / ATCC MYA-2876) (Yeast).